A 634-amino-acid chain; its full sequence is DNA mismatch repair protein MutL (634 aa).

A disordered region spans residues 406–427 (HTHHNDTKGSVHTKSFSARSSS).

This sequence belongs to the DNA mismatch repair MutL/HexB family.

Functionally, this protein is involved in the repair of mismatches in DNA. It is required for dam-dependent methyl-directed DNA mismatch repair. May act as a 'molecular matchmaker', a protein that promotes the formation of a stable complex between two or more DNA-binding proteins in an ATP-dependent manner without itself being part of a final effector complex. This is DNA mismatch repair protein MutL from Anaplasma phagocytophilum (strain HZ).